The chain runs to 182 residues: Inosine/xanthosine triphosphatase (182 aa).

The protein belongs to the YjjX NTPase family. As to quaternary structure, homodimer. Mg(2+) serves as cofactor. It depends on Mn(2+) as a cofactor.

The enzyme catalyses XTP + H2O = XDP + phosphate + H(+). It catalyses the reaction ITP + H2O = IDP + phosphate + H(+). Its function is as follows. Phosphatase that hydrolyzes non-canonical purine nucleotides such as XTP and ITP to their respective diphosphate derivatives. Probably excludes non-canonical purines from DNA/RNA precursor pool, thus preventing their incorporation into DNA/RNA and avoiding chromosomal lesions. This chain is Inosine/xanthosine triphosphatase, found in Vibrio parahaemolyticus serotype O3:K6 (strain RIMD 2210633).